We begin with the raw amino-acid sequence, 943 residues long: Nuclear receptor coactivator 7 (943 aa).

N-acetylmethionine is present on M1. Over residues 1–15 the composition is skewed to basic and acidic residues; the sequence is MDTKEEKKEQKERKQ. Residues 1-32 adopt a coiled-coil conformation; it reads MDTKEEKKEQKERKQSYFARLKKKKQAKQNAE. Positions 1–83 are disordered; the sequence is MDTKEEKKEQ…RKSNQLKEIR (83 aa). A Phosphoserine modification is found at S92. The 44-residue stretch at 117–160 folds into the LysM domain; that stretch reads MEYTAGSQDTLNSVALKFNVTPNKLVELNKLFTHTIVPGQVLFV. The residue at position 137 (T137) is a Phosphothreonine. Residues 169-189 form a disordered region; the sequence is TIQLSSSTPGATVSPSSSDAE. The segment covering 177–187 has biased composition (polar residues); sequence PGATVSPSSSD. A phosphoserine mark is found at S182, S186, S211, S212, and S214. The interval 334–369 is disordered; sequence EKRQQNGERTLALDAKSVRSPEESTERTCTRIEPPD. Over residues 349–369 the composition is skewed to basic and acidic residues; the sequence is KSVRSPEESTERTCTRIEPPD. A phosphoserine mark is found at S442, S498, and S500. Positions 486 to 499 are enriched in basic and acidic residues; it reads EKQDEAPEVDKHSG. 2 disordered regions span residues 486 to 507 and 543 to 576; these read EKQD…LGES and LSDR…NKEP. The 162-residue stretch at 782 to 943 folds into the TLDc domain; the sequence is ALLENMHIEQ…VQDLEVWTFE (162 aa).

It belongs to the OXR1 family. As to quaternary structure, interacts with ESR1, ESR2A, ESR2B, THRB, PPARG and RARA in a ligand-inducible manner. Interacts with the heterodimer AHR-ARNT. Highly expressed in brain and kidney. Weakly expressed in mammary gland, lung and testis. In brain, expression is found in neurons of cerebral cortex, thalamus, hypothalamus, hippocampus, cerebellum, striatum and choroid plexus.

It localises to the nucleus. Enhances the transcriptional activities of several nuclear receptors. Involved in the coactivation of different nuclear receptors, such as ESR1, THRB, PPARG and RARA. This chain is Nuclear receptor coactivator 7 (Ncoa7), found in Mus musculus (Mouse).